The chain runs to 1370 residues: Zinc finger MYM-type protein 3 (1370 aa).

Composition is skewed to low complexity over residues 1-12 (MDPSDFPSPFDP), 40-56 (APSR…SSGA), and 130-146 (GAGA…EPLA). 2 disordered regions span residues 1–73 (MDPS…PGGV) and 85–310 (GLLY…MGTK). The segment covering 227-255 (TGKEIEKPPERVQKRSERVRRAEPPKPEV) has biased composition (basic and acidic residues). 2 positions are modified to phosphoserine: serine 265 and serine 269. The segment covering 265–281 (SDEDSDAMVDDPNDEDF) has biased composition (acidic residues). Glycyl lysine isopeptide (Lys-Gly) (interchain with G-Cter in SUMO2) cross-links involve residues lysine 310, lysine 322, and lysine 330. MYM-type zinc fingers lie at residues 334–368 (QLFC…TKDS), 380–424 (HEFC…LHEV), 431–466 (HRLC…RPGG), 479–513 (KRFC…FEML), 523–561 (SLFC…PCYY), 569–606 (YQFC…KPEV), 614–648 (FQFC…HEKL), 655–694 (KSFC…GVTE), and 701–735 (WDFC…LETI). Residues 761–789 (NLDTQSGPESLLNSQSSESKPQTPSQTKV) are compositionally biased toward polar residues. The tract at residues 761 to 831 (NLDTQSGPES…PPPPATPRKN (71 aa)) is disordered. Glycyl lysine isopeptide (Lys-Gly) (interchain with G-Cter in SUMO2) cross-links involve residues lysine 780 and lysine 788. The segment covering 790–799 (ENNHTVRTPD) has biased composition (basic and acidic residues). The residue at position 797 (threonine 797) is a Phosphothreonine. Lysine 806 is covalently cross-linked (Glycyl lysine isopeptide (Lys-Gly) (interchain with G-Cter in SUMO2)). Pro residues predominate over residues 816-827 (VPTPPPPPPPAT). 2 positions are modified to phosphothreonine: threonine 818 and threonine 827. Residues lysine 848, lysine 862, lysine 921, and lysine 1276 each participate in a glycyl lysine isopeptide (Lys-Gly) (interchain with G-Cter in SUMO2) cross-link.

May be a component of a BHC histone deacetylase complex that contains HDAC1, HDAC2, HMG20B/BRAF35, KDM1A, RCOR1/CoREST, PHF21A/BHC80, ZMYM2, ZNF217, ZMYM3, GSE1 and GTF2I. In terms of tissue distribution, ubiquitously expressed in all embryonic stages and adult tissues.

It is found in the nucleus. Functionally, plays a role in the regulation of cell morphology and cytoskeletal organization. This Mus musculus (Mouse) protein is Zinc finger MYM-type protein 3 (Zmym3).